A 603-amino-acid polypeptide reads, in one-letter code: Threonine--tRNA ligase (603 aa).

The tract at residues 197–499 (DHRKLGKELG…LIEEYAGDFP (303 aa)) is catalytic. Zn(2+) is bound by residues C296, H347, and H476.

It belongs to the class-II aminoacyl-tRNA synthetase family. In terms of assembly, homodimer. Requires Zn(2+) as cofactor.

It localises to the cytoplasm. The catalysed reaction is tRNA(Thr) + L-threonine + ATP = L-threonyl-tRNA(Thr) + AMP + diphosphate + H(+). Functionally, catalyzes the attachment of threonine to tRNA(Thr) in a two-step reaction: L-threonine is first activated by ATP to form Thr-AMP and then transferred to the acceptor end of tRNA(Thr). Also edits incorrectly charged L-seryl-tRNA(Thr). In Synechocystis sp. (strain ATCC 27184 / PCC 6803 / Kazusa), this protein is Threonine--tRNA ligase.